The primary structure comprises 329 residues: 4-hydroxythreonine-4-phosphate dehydrogenase (329 aa).

His136 and Thr137 together coordinate substrate. A divalent metal cation-binding residues include His166, His211, and His266. Substrate is bound by residues Lys274, Asn283, and Arg292.

This sequence belongs to the PdxA family. In terms of assembly, homodimer. It depends on Zn(2+) as a cofactor. Mg(2+) is required as a cofactor. The cofactor is Co(2+).

The protein localises to the cytoplasm. It catalyses the reaction 4-(phosphooxy)-L-threonine + NAD(+) = 3-amino-2-oxopropyl phosphate + CO2 + NADH. It participates in cofactor biosynthesis; pyridoxine 5'-phosphate biosynthesis; pyridoxine 5'-phosphate from D-erythrose 4-phosphate: step 4/5. Catalyzes the NAD(P)-dependent oxidation of 4-(phosphooxy)-L-threonine (HTP) into 2-amino-3-oxo-4-(phosphooxy)butyric acid which spontaneously decarboxylates to form 3-amino-2-oxopropyl phosphate (AHAP). This is 4-hydroxythreonine-4-phosphate dehydrogenase from Shigella dysenteriae serotype 1 (strain Sd197).